Reading from the N-terminus, the 1099-residue chain is Zinc finger protein basonuclin-2 (1099 aa).

Residues 45 to 66 form a disordered region; it reads EEAEVDVRERETQRDREPKRAR. The span at 49 to 66 shows a compositional bias: basic and acidic residues; sequence VDVRERETQRDREPKRAR. Residue Lys-277 forms a Glycyl lysine isopeptide (Lys-Gly) (interchain with G-Cter in SUMO2) linkage. Positions 357 to 385 are disordered; that stretch reads LSTQNEYNESSESEVSPTPYKNDQTPNRN. Residues 361–372 are compositionally biased toward low complexity; sequence NEYNESSESEVS. The span at 375 to 385 shows a compositional bias: polar residues; the sequence is PYKNDQTPNRN. Residues Lys-396, Lys-416, and Lys-421 each participate in a glycyl lysine isopeptide (Lys-Gly) (interchain with G-Cter in SUMO2) cross-link. Residues 397–423 form a disordered region; it reads TEPACVSPIQNSAPVSDLTKTEHPKSS. A C2H2-type 1 zinc finger spans residues 441 to 464; the sequence is VFCNACGKTFYDKGTLKIHYNAVH. Ser-561 carries the post-translational modification Phosphoserine. Disordered stretches follow at residues 622-641 and 648-742; these read EPSA…MPVK and DTAD…EGDE. Lys-641 is covalently cross-linked (Glycyl lysine isopeptide (Lys-Gly) (interchain with G-Cter in SUMO2)). Over residues 648 to 661 the composition is skewed to acidic residues; that stretch reads DTADEFDDEDDDPN. 2 stretches are compositionally biased toward basic and acidic residues: residues 670-680 and 719-742; these read MSHDNHCHSQE and ERDY…EGDE. The segment at 833–856 adopts a C2H2-type 2 zinc-finger fold; it reads KICYVCKKSFKSSYSVKLHYRNVH. Glycyl lysine isopeptide (Lys-Gly) (interchain with G-Cter in SUMO2) cross-links involve residues Lys-894 and Lys-919. 2 disordered regions span residues 929 to 948 and 968 to 1008; these read LDVR…HLNG and LQSS…KAEA. The span at 982-995 shows a compositional bias: acidic residues; it reads AGSDEGILLDDIDG. 2 C2H2-type zinc fingers span residues 1035–1058 and 1063–1090; these read IMCN…KTVH and HKCK…PNLH. The disordered stretch occupies residues 1079–1099; the sequence is SRNRHSQNPNLHKNIPFTSVD.

In terms of tissue distribution, highly expressed in testis, uterus and small intestine, and weakly expressed in colon and prostate. Also expressed in skin, primary keratinocytes, immortalized keratinocytes, and HeLa and HEK293 cells. Not detected in blood, thymus, spleen or Hep-G2 cells.

It localises to the nucleus. Its function is as follows. Probable transcription factor specific for skin keratinocytes. May play a role in the differentiation of spermatozoa and oocytes. May also play an important role in early urinary-tract development. In Homo sapiens (Human), this protein is Zinc finger protein basonuclin-2.